The following is a 372-amino-acid chain: Cuticle collagen dpy-10 (372 aa).

Residues 1-45 (MKNNAKEDYRTFSLTTNYSRQMIYRCVTGLQIGFSLFSFIIVCVA) form the signal peptide. Triple-helical region stretches follow at residues 144–173 (GPPGPRGSSGTPGKPGLPGNAGKPGMPGTT), 195–251 (GPPG…KGPT), and 259–324 (GPPG…PGVC). The disordered stretch occupies residues 144–372 (GPPGPRGSSG…RAGYQGYGRK (229 aa)). Residues 185 to 196 (EPPPCRPCPKGP) are compositionally biased toward pro residues. Residues 197 to 208 (PGIKGWPGFPGD) are compositionally biased toward low complexity. Gly residues-rich tracts occupy residues 237-246 (GYRGGPGAPG) and 283-292 (GLTGGQGERG). The span at 293-303 (WPGVSGESGEP) shows a compositional bias: low complexity. Residues 353–363 (GYGGSRGGGDR) are compositionally biased toward gly residues.

This sequence belongs to the cuticular collagen family. Collagen polypeptide chains are complexed within the cuticle by disulfide bonds and other types of covalent cross-links.

Nematode cuticles are composed largely of collagen-like proteins. The cuticle functions both as an exoskeleton and as a barrier to protect the worm from its environment. The chain is Cuticle collagen dpy-10 (dpy-10) from Caenorhabditis elegans.